Reading from the N-terminus, the 150-residue chain is Arginine repressor (150 aa).

Belongs to the ArgR family.

It is found in the cytoplasm. It participates in amino-acid biosynthesis; L-arginine biosynthesis [regulation]. Functionally, regulates arginine biosynthesis genes. This Staphylococcus haemolyticus (strain JCSC1435) protein is Arginine repressor.